The chain runs to 38 residues: Large ribosomal subunit protein bL36 (38 aa).

The protein belongs to the bacterial ribosomal protein bL36 family.

This Pseudomonas entomophila (strain L48) protein is Large ribosomal subunit protein bL36.